Here is a 604-residue protein sequence, read N- to C-terminus: uncharacterized protein (604 aa).

The disordered stretch occupies residues 239–259; that stretch reads ELNSPQELNDPQELNNSQDLN.

This is an uncharacterized protein from Escherichia coli (strain K12).